The sequence spans 292 residues: Tricin synthase 2 (292 aa).

Positions 21–46 are disordered; the sequence is RTTPASRVSSTAMAAANGDASHGANG. A compositionally biased stretch (polar residues) spans 23-32; it reads TPASRVSSTA. Residues S108, E130, 132 to 133, S138, D156, and A185 contribute to the S-adenosyl-L-methionine site; that span reads GV. D208 lines the a divalent metal cation pocket. An S-adenosyl-L-methionine-binding site is contributed by D210. Positions 234 and 235 each coordinate a divalent metal cation.

Belongs to the class I-like SAM-binding methyltransferase superfamily. Cation-dependent O-methyltransferase family. CCoAMT subfamily. Mg(2+) serves as cofactor. Mn(2+) is required as a cofactor. As to expression, expressed in stems only.

The catalysed reaction is tricetin + 2 S-adenosyl-L-methionine = 3',5'-di-O-methyltricetin + 2 S-adenosyl-L-homocysteine + 2 H(+). Catalyzes the stepwise methylation of tricetin to its 3'-mono- and 3',5'-dimethyl ethers. No 3',4',5'-trimethylated ester derivatives are produced. Can use caffeoyl CoA, 5-hydroxyferulic acid, luteolin, tricetin, quercetin, myrcetin and 7,8-dihydroxyflavone as substrates, but not naringenin, apigenin or kaempferol. The 2,3-double bond and the O-dihydroxyl group of the substrate are both required for catalytic activity of the enzyme. The polypeptide is Tricin synthase 2 (ROMT-17) (Oryza sativa subsp. japonica (Rice)).